The chain runs to 556 residues: MERKQSNAHSTFADINEVEDEAEQELQQQENNNNKRFSGNRGPNRGKQRPFRGFSRQVSLETGFSVLNRESRERDDKKSLPRSGRSFGGFESGGIINGGDGRKTDFSMFRTKSTLSKQKSLLPSIIRERDIENSLRTEDGETKDDSINENVSAGRYFAALRGPELDEVKDNEDILLPKEEQWPFLLRFPIGCFGICLGLSSQAVLWLALAKSPATNFLHITPLINLVVWLFSLVVLVSVSFTYILKCIFYFEAVKREYFHPVRVNFFFAPWVVCMFLAISVPPMFSPNRKYLHPAIWCVFMGPYFFLELKIYGQWLSGGKRRLCKVANPSSHLSVVGNFVGAILASKVGWDEVAKFLWAVGFAHYLVVFVTLYQRLPTSEALPKELHPVYSMFIAAPSAASIAWNTIYGQFDGCSRTCFFIALFLYISLVARINFFTGFKFSVAWWSYTFPMTTASVATIKYAEAVPGYPSRALALTLSFISTAMVCVLFVSTLLHAFVWQTLFPNDLAIAITKRKLTREKKPFKRAYDLKRWTKQALAKKISAEKDFEAEEESHH.

Residues 1–103 form a disordered region; the sequence is MERKQSNAHS…GIINGGDGRK (103 aa). Residues 1–189 lie on the Cytoplasmic side of the membrane; the sequence is MERKQSNAHS…EQWPFLLRFP (189 aa). Positions 10 to 36 form a coiled coil; the sequence is STFADINEVEDEAEQELQQQENNNNKR. Low complexity predominate over residues 25 to 34; the sequence is ELQQQENNNN. A Phosphoserine; by SRK2E modification is found at S59. The segment covering 69–79 has biased composition (basic and acidic residues); that stretch reads RESRERDDKKS. Phosphoserine; by SRK2E is present on residues S86, S113, and S120. Gly residues predominate over residues 86-99; sequence SFGGFESGGIINGG. Phosphoserine is present on S146. Residues 190-210 form a helical membrane-spanning segment; sequence IGCFGICLGLSSQAVLWLALA. Topologically, residues 211-216 are extracellular; sequence KSPATN. The helical transmembrane segment at 217–237 threads the bilayer; sequence FLHITPLINLVVWLFSLVVLV. The Cytoplasmic portion of the chain corresponds to 238-265; that stretch reads SVSFTYILKCIFYFEAVKREYFHPVRVN. Residues 266–286 traverse the membrane as a helical segment; that stretch reads FFFAPWVVCMFLAISVPPMFS. Topologically, residues 287-295 are extracellular; it reads PNRKYLHPA. The helical transmembrane segment at 296 to 316 threads the bilayer; it reads IWCVFMGPYFFLELKIYGQWL. At 317–325 the chain is on the cytoplasmic side; that stretch reads SGGKRRLCK. A helical membrane pass occupies residues 326-346; it reads VANPSSHLSVVGNFVGAILAS. The Extracellular segment spans residues 347-352; the sequence is KVGWDE. The chain crosses the membrane as a helical span at residues 353–373; that stretch reads VAKFLWAVGFAHYLVVFVTLY. Over 374 to 388 the chain is Cytoplasmic; the sequence is QRLPTSEALPKELHP. Residues 389 to 409 traverse the membrane as a helical segment; it reads VYSMFIAAPSAASIAWNTIYG. The Extracellular portion of the chain corresponds to 410 to 418; the sequence is QFDGCSRTC. A helical membrane pass occupies residues 419 to 439; sequence FFIALFLYISLVARINFFTGF. K440 is a topological domain (cytoplasmic). Residues 441-463 traverse the membrane as a helical segment; that stretch reads FSVAWWSYTFPMTTASVATIKYA. Over 464-479 the chain is Extracellular; that stretch reads EAVPGYPSRALALTLS. A helical transmembrane segment spans residues 480–500; it reads FISTAMVCVLFVSTLLHAFVW. The Cytoplasmic portion of the chain corresponds to 501–556; that stretch reads QTLFPNDLAIAITKRKLTREKKPFKRAYDLKRWTKQALAKKISAEKDFEAEEESHH.

The protein belongs to the SLAC1 S-type anion channel family. In terms of assembly, homotrimer. Interacts with SRK2E, CPK6, CPK21, CPK23 and PP2CA. The channel is inactivated upon PP2CA and ABI1 binding. Interacts with KAT1, KAT2, KAT3/KC1 and AKT2. Interacts with GHR1. Post-translationally, phosphorylation by SRK2E, especially on Ser-120, activates the channel. Also phosphorylated and activated by CPK21 and CPK23. Abscisic acid (ABA) promotes phosphorylation. This phosphorylation is inhibited by ABI1. Phosphorylated and activated by GHR1; this phosphorylation is repressed by ABI2 but not ABI1. Phosphorylated by HT1 on N-terminus but not C-terminus. As to expression, preferentially expressed in guard cells. Also detected in the vascular strands close to the leaf margins.

The protein localises to the cell membrane. Its activity is regulated as follows. Activated by GHR1-mediated phosphorylation which is negatively regulated by ABI2 but not ABI1. Activation by SRK2E/OST1 and GHR1 is repressed by HT1. Functionally, slow, weak voltage-dependent S-type anion efflux channel involved in maintenance of anion homeostasis. Cl(-) efflux through SLAC1 causes membrane depolarization, which activates outward-rectifying K1 channels, leading to KCl and water efflux to reduce turgor further and cause stomatal closure, that reduces water loss and promotes leaf turgor. Essential for stomatal closure in response to CO(2), abscisic acid (ABA), ozone O(3), light/dark transitions, humidity change, calcium ions, hydrogen peroxide H(2)O(2), reactive oxygen species (ROS), and nitric oxide. Binds to the highly selective inward-rectifying potassium channels KAT1 and AKT2, and inhibits their activities. Functions as an essential negative regulator of inward potassium channels in guard cells. Essential for the efficient stomatal closure and opening in guard cells. Involved in the local and/or systemic stomatal responses (e.g. stomatal closure) to light stress. This is Guard cell S-type anion channel SLAC1 from Arabidopsis thaliana (Mouse-ear cress).